Consider the following 103-residue polypeptide: NADH-quinone oxidoreductase subunit K (103 aa).

Transmembrane regions (helical) follow at residues 5–25 (ISSYLMVALILFCVGLYGALT), 30–50 (VVVLLSIELMLNAVNINLVAF), and 66–86 (LFTMTVAAAEVAVGLAILIAL).

It belongs to the complex I subunit 4L family. In terms of assembly, NDH-1 is composed of 14 different subunits. Subunits NuoA, H, J, K, L, M, N constitute the membrane sector of the complex.

The protein localises to the cell membrane. The enzyme catalyses a quinone + NADH + 5 H(+)(in) = a quinol + NAD(+) + 4 H(+)(out). NDH-1 shuttles electrons from NADH, via FMN and iron-sulfur (Fe-S) centers, to quinones in the respiratory chain. The immediate electron acceptor for the enzyme in this species is believed to be a menaquinone. Couples the redox reaction to proton translocation (for every two electrons transferred, four hydrogen ions are translocated across the cytoplasmic membrane), and thus conserves the redox energy in a proton gradient. In Brevibacillus brevis (strain 47 / JCM 6285 / NBRC 100599), this protein is NADH-quinone oxidoreductase subunit K.